A 263-amino-acid chain; its full sequence is Polyamine aminopropyltransferase (263 aa).

The PABS domain maps to 1-221 (MARHPYRRLR…AVMAFQSSPK (221 aa)). S-methyl-5'-thioadenosine is bound by residues Asp-98 and 126–127 (DG). Residue Asp-144 is the Proton acceptor of the active site.

This sequence belongs to the spermidine/spermine synthase family. As to quaternary structure, homodimer or homotetramer.

It localises to the cytoplasm. It catalyses the reaction S-adenosyl 3-(methylsulfanyl)propylamine + putrescine = S-methyl-5'-thioadenosine + spermidine + H(+). It participates in amine and polyamine biosynthesis; spermidine biosynthesis; spermidine from putrescine: step 1/1. In terms of biological role, catalyzes the irreversible transfer of a propylamine group from the amino donor S-adenosylmethioninamine (decarboxy-AdoMet) to putrescine (1,4-diaminobutane) to yield spermidine. In Neisseria meningitidis serogroup A / serotype 4A (strain DSM 15465 / Z2491), this protein is Polyamine aminopropyltransferase.